We begin with the raw amino-acid sequence, 542 residues long: Chaperonin GroEL (542 aa).

ATP is bound by residues 29–32 (TLGP), 86–90 (DGTTT), G413, 476–478 (NAA), and D492.

The protein belongs to the chaperonin (HSP60) family. In terms of assembly, forms a cylinder of 14 subunits composed of two heptameric rings stacked back-to-back. Interacts with the co-chaperonin GroES.

It is found in the cytoplasm. It catalyses the reaction ATP + H2O + a folded polypeptide = ADP + phosphate + an unfolded polypeptide.. Together with its co-chaperonin GroES, plays an essential role in assisting protein folding. The GroEL-GroES system forms a nano-cage that allows encapsulation of the non-native substrate proteins and provides a physical environment optimized to promote and accelerate protein folding. The chain is Chaperonin GroEL from Lactococcus lactis subsp. cremoris (strain MG1363).